The primary structure comprises 92 residues: Small ribosomal subunit protein uS19c (92 aa).

It belongs to the universal ribosomal protein uS19 family.

It localises to the plastid. Its subcellular location is the chloroplast. Functionally, protein S19 forms a complex with S13 that binds strongly to the 16S ribosomal RNA. This chain is Small ribosomal subunit protein uS19c (rps19), found in Picea abies (Norway spruce).